The chain runs to 706 residues: DNA ligase (706 aa).

Residues 48 to 52 (DAAYD), 97 to 98 (SL), and Glu131 contribute to the NAD(+) site. The active-site N6-AMP-lysine intermediate is the Lys133. NAD(+)-binding residues include Arg154, Glu191, Lys307, and Lys331. Positions 425, 428, 443, and 449 each coordinate Zn(2+). Residues 628–706 (RADSAVAGKT…EDEWLKLIEG (79 aa)) form the BRCT domain.

It belongs to the NAD-dependent DNA ligase family. LigA subfamily. The cofactor is Mg(2+). It depends on Mn(2+) as a cofactor.

It carries out the reaction NAD(+) + (deoxyribonucleotide)n-3'-hydroxyl + 5'-phospho-(deoxyribonucleotide)m = (deoxyribonucleotide)n+m + AMP + beta-nicotinamide D-nucleotide.. In terms of biological role, DNA ligase that catalyzes the formation of phosphodiester linkages between 5'-phosphoryl and 3'-hydroxyl groups in double-stranded DNA using NAD as a coenzyme and as the energy source for the reaction. It is essential for DNA replication and repair of damaged DNA. This is DNA ligase from Afipia carboxidovorans (strain ATCC 49405 / DSM 1227 / KCTC 32145 / OM5) (Oligotropha carboxidovorans).